We begin with the raw amino-acid sequence, 62 residues long: DNA-directed RNA polymerase subunit Rpo10 (62 aa).

Residues cysteine 6, cysteine 9, cysteine 43, and cysteine 44 each coordinate Zn(2+).

It belongs to the archaeal Rpo10/eukaryotic RPB10 RNA polymerase subunit family. As to quaternary structure, part of the RNA polymerase complex. Zn(2+) is required as a cofactor.

The protein localises to the cytoplasm. It carries out the reaction RNA(n) + a ribonucleoside 5'-triphosphate = RNA(n+1) + diphosphate. Functionally, DNA-dependent RNA polymerase (RNAP) catalyzes the transcription of DNA into RNA using the four ribonucleoside triphosphates as substrates. The chain is DNA-directed RNA polymerase subunit Rpo10 from Methanosarcina barkeri (strain Fusaro / DSM 804).